Reading from the N-terminus, the 1545-residue chain is Pentafunctional AROM polypeptide (1545 aa).

A 3-dehydroquinate synthase region spans residues 1 to 383 (MSGLIEKVSI…YEPKASYVND (383 aa)). Residues 44–46 (DSN), 82–85 (EANK), 113–115 (GGV), and aspartate 118 contribute to the NAD(+) site. Arginine 129 is a binding site for 7-phospho-2-dehydro-3-deoxy-D-arabino-heptonate. 138 to 139 (TS) contributes to the NAD(+) binding site. Residues aspartate 145 and lysine 151 each contribute to the 7-phospho-2-dehydro-3-deoxy-D-arabino-heptonate site. Position 160 (lysine 160) interacts with NAD(+). Asparagine 161 provides a ligand contact to 7-phospho-2-dehydro-3-deoxy-D-arabino-heptonate. NAD(+) contacts are provided by residues 178–181 (FLET) and asparagine 189. Glutamate 193 provides a ligand contact to Zn(2+). 7-phospho-2-dehydro-3-deoxy-D-arabino-heptonate contacts are provided by residues 193–196 (EVVK) and lysine 249. Catalysis depends on glutamate 259, which acts as the Proton acceptor; for 3-dehydroquinate synthase activity. 7-phospho-2-dehydro-3-deoxy-D-arabino-heptonate-binding positions include 263-267 (RNLLN) and histidine 270. Histidine 270 provides a ligand contact to Zn(2+). Histidine 274 (proton acceptor; for 3-dehydroquinate synthase activity) is an active-site residue. Positions 286 and 355 each coordinate 7-phospho-2-dehydro-3-deoxy-D-arabino-heptonate. Histidine 286 serves as a coordination point for Zn(2+). Residues 396–840 (VKDFNSAPST…WDILHTTFNV (445 aa)) are EPSP synthase. Cysteine 822 serves as the catalytic For EPSP synthase activity. The shikimate kinase stretch occupies residues 859 to 1049 (DKSIIVIGMR…IPNGRSAFVC (191 aa)). 866–873 (GMRAAGKS) contacts ATP. The tract at residues 1050-1261 (LTYEDLAPVS…AAPGQLTLKE (212 aa)) is 3-dehydroquinase. The Proton acceptor; for 3-dehydroquinate dehydratase activity role is filled by histidine 1166. Lysine 1195 functions as the Schiff-base intermediate with substrate; for 3-dehydroquinate dehydratase activity in the catalytic mechanism. Residues 1274–1545 (RKKFYIVGKP…GYQFSSHIDL (272 aa)) form a shikimate dehydrogenase region.

In the N-terminal section; belongs to the sugar phosphate cyclases superfamily. Dehydroquinate synthase family. This sequence in the 2nd section; belongs to the EPSP synthase family. The protein in the 3rd section; belongs to the shikimate kinase family. It in the 4th section; belongs to the type-I 3-dehydroquinase family. In the C-terminal section; belongs to the shikimate dehydrogenase family. Homodimer. The cofactor is Zn(2+).

It localises to the cytoplasm. It carries out the reaction 7-phospho-2-dehydro-3-deoxy-D-arabino-heptonate = 3-dehydroquinate + phosphate. The enzyme catalyses 3-dehydroquinate = 3-dehydroshikimate + H2O. It catalyses the reaction shikimate + NADP(+) = 3-dehydroshikimate + NADPH + H(+). The catalysed reaction is shikimate + ATP = 3-phosphoshikimate + ADP + H(+). It carries out the reaction 3-phosphoshikimate + phosphoenolpyruvate = 5-O-(1-carboxyvinyl)-3-phosphoshikimate + phosphate. It functions in the pathway metabolic intermediate biosynthesis; chorismate biosynthesis; chorismate from D-erythrose 4-phosphate and phosphoenolpyruvate: step 2/7. The protein operates within metabolic intermediate biosynthesis; chorismate biosynthesis; chorismate from D-erythrose 4-phosphate and phosphoenolpyruvate: step 3/7. Its pathway is metabolic intermediate biosynthesis; chorismate biosynthesis; chorismate from D-erythrose 4-phosphate and phosphoenolpyruvate: step 4/7. It participates in metabolic intermediate biosynthesis; chorismate biosynthesis; chorismate from D-erythrose 4-phosphate and phosphoenolpyruvate: step 5/7. It functions in the pathway metabolic intermediate biosynthesis; chorismate biosynthesis; chorismate from D-erythrose 4-phosphate and phosphoenolpyruvate: step 6/7. Functionally, the AROM polypeptide catalyzes 5 consecutive enzymatic reactions in prechorismate polyaromatic amino acid biosynthesis. This Komagataella phaffii (strain GS115 / ATCC 20864) (Yeast) protein is Pentafunctional AROM polypeptide.